The following is a 159-amino-acid chain: Small ribosomal subunit protein uS9 (159 aa).

Belongs to the universal ribosomal protein uS9 family.

This Rickettsia rickettsii (strain Iowa) protein is Small ribosomal subunit protein uS9.